The sequence spans 65 residues: Large ribosomal subunit protein bL35 (65 aa).

The disordered stretch occupies residues 1–28 (MPKIKTNRGAAKRFRKTGSGKIRRNKAF). Basic residues predominate over residues 10-26 (AAKRFRKTGSGKIRRNK).

Belongs to the bacterial ribosomal protein bL35 family.

This chain is Large ribosomal subunit protein bL35, found in Syntrophotalea carbinolica (strain DSM 2380 / NBRC 103641 / GraBd1) (Pelobacter carbinolicus).